The primary structure comprises 606 residues: MPDMPLRILVETIERLELVTARTQLVAFLVNLFKQTPPEIIDKVVYLVQGILWPDWKGMPELGVGEKMLIKAISLACNISEREVEKTAKEIGDIGKATEKLKQTAQSKQTGLTIFAFTQQPTGLTVTNTYNTLVKIAMAQGEGSKDLKIRLLAGLLKDASPKEAKFIVKFVEGKLRVGIGDATIMDALAVTFGGGVANRPVIERAYNLRSDLGEVAKILASKGIEELKKIKPEVGVPIRPMLAERLSDPREILVKTGGEAFVEYKYDGERAQIHKKGDKIWIYSRRLENITSQYPDVVERALEKIKADEAIVEGEIVVYDPDTGELKPFQELMHRKRKHDIRQAIKEYPVKVFLFDLLYLNGEDYTLKPLPVRREALEKIIDKTEDFTIAEYIKTSNPEELEKFFLEAIGNGVEGVMAKAIHKDSIYQAGVRGWLWIKYKRDYKSEMADTVDLVVVGAFYGKGRRGGKYGALLMAAYNKEKDVFETVCKVGSGFKDEDLDKLPDMLKPYIRDRKHPRVVAEIEPDVWVDPVLVAEIIGAELTLSPIHTCAKGVIKPDAGISIRFPRFIRWRPDKRPEDATTSSELVEMYQRQLKKITTEQATQEQL.

E263 serves as a coordination point for ATP. The active-site N6-AMP-lysine intermediate is the K265. R270, R285, E315, F355, R432, and K438 together coordinate ATP.

Belongs to the ATP-dependent DNA ligase family. Mg(2+) serves as cofactor. It depends on Mn(2+) as a cofactor.

The enzyme catalyses ATP + (deoxyribonucleotide)n-3'-hydroxyl + 5'-phospho-(deoxyribonucleotide)m = (deoxyribonucleotide)n+m + AMP + diphosphate.. The catalysed reaction is ADP + (deoxyribonucleotide)n-3'-hydroxyl + 5'-phospho-(deoxyribonucleotide)m = (deoxyribonucleotide)n+m + AMP + phosphate.. It catalyses the reaction GTP + (deoxyribonucleotide)n-3'-hydroxyl + 5'-phospho-(deoxyribonucleotide)m = (deoxyribonucleotide)n+m + GMP + diphosphate.. Its function is as follows. DNA ligase that seals nicks in double-stranded DNA during DNA replication, DNA recombination and DNA repair. Can use ATP, ADP and GTP, but not CTP, TTP or NAD(+). This chain is DNA ligase, found in Sulfophobococcus zilligii.